Consider the following 102-residue polypeptide: MAKGQSLQDPFLNALRRERVPVSIYLVNGIKLQGQIESFDQFVILLKNTVSQMVYKHAISTVVPSRPVSHHSNNAGGGASNNYHHGSNVQGSTAQQDSEETE.

The Sm domain occupies 9–68 (DPFLNALRRERVPVSIYLVNGIKLQGQIESFDQFVILLKNTVSQMVYKHAISTVVPSRPV). The interval 63–102 (VPSRPVSHHSNNAGGGASNNYHHGSNVQGSTAQQDSEETE) is disordered. Residues 70–88 (HHSNNAGGGASNNYHHGSN) are compositionally biased toward low complexity.

This sequence belongs to the Hfq family. Homohexamer.

In terms of biological role, RNA chaperone that binds small regulatory RNA (sRNAs) and mRNAs to facilitate mRNA translational regulation in response to envelope stress, environmental stress and changes in metabolite concentrations. Also binds with high specificity to tRNAs. This Salmonella choleraesuis (strain SC-B67) protein is RNA-binding protein Hfq.